The sequence spans 326 residues: Vascular endothelial growth factor D (326 aa).

The signal sequence occupies residues 1 to 21; that stretch reads MYGEWAAVNILMMSYVYLVQG. Residues 22–93 constitute a propeptide that is removed on maturation; sequence FSIEHRAVKD…SRSTSHRSTR (72 aa). Cystine bridges form between Cys-116-Cys-158, Cys-147-Cys-194, and Cys-151-Cys-196. Asn-160 and Asn-190 each carry an N-linked (GlcNAc...) asparagine glycan. Positions 211–326 are excised as a propeptide; sequence SIQIPEEDQC…CRSMVFSLSP (116 aa). The 1; approximate repeat unit spans residues 227–242; that stretch reads CPVDMLWDNTKCKCVL. The 4 X 16 AA repeats of C-X(10)-C-X-C-X(1,3)-C stretch occupies residues 227–317; the sequence is CPVDMLWDNT…KHKMFHPDTC (91 aa). Tandem repeats lie at residues 263–278 and 282–298. N-linked (GlcNAc...) asparagine glycosylation occurs at Asn-292. A 4; truncated repeat occupies 306–317; the sequence is CQKHKMFHPDTC.

The protein belongs to the PDGF/VEGF growth factor family. As to quaternary structure, homodimer; non-covalent and antiparallel. Post-translationally, undergoes a complex proteolytic maturation which generates a variety of processed secreted forms with increased activity toward VEGFR-3 and VEGFR-2. VEGF-D first form an antiparallel homodimer linked by disulfide bonds before secretion. The fully processed VEGF-D is composed mostly of two VEGF homology domains (VHDs) bound by non-covalent interactions. As to expression, highly expressed in the spleen, kidney, lung, tongue, ovary and mammary gland.

It is found in the secreted. Functionally, growth factor active in angiogenesis, lymphangiogenesis and endothelial cell growth, stimulating their proliferation and migration and also has effects on the permeability of blood vessels. May function in the formation of the venous and lymphatic vascular systems during embryogenesis, and also in the maintenance of differentiated lymphatic endothelium in adults. Binds and activates VEGFR-3 (Flt4) receptor. The protein is Vascular endothelial growth factor D of Rattus norvegicus (Rat).